A 364-amino-acid chain; its full sequence is Histidinol-phosphate aminotransferase (364 aa).

N6-(pyridoxal phosphate)lysine is present on Lys220.

This sequence belongs to the class-II pyridoxal-phosphate-dependent aminotransferase family. Histidinol-phosphate aminotransferase subfamily. In terms of assembly, homodimer. Pyridoxal 5'-phosphate is required as a cofactor.

It catalyses the reaction L-histidinol phosphate + 2-oxoglutarate = 3-(imidazol-4-yl)-2-oxopropyl phosphate + L-glutamate. Its pathway is amino-acid biosynthesis; L-histidine biosynthesis; L-histidine from 5-phospho-alpha-D-ribose 1-diphosphate: step 7/9. This is Histidinol-phosphate aminotransferase from Stenotrophomonas maltophilia (strain R551-3).